The chain runs to 482 residues: MVYNQDLSISNKTCGISDWLPPVRNKKISDIKSNSWFDIRRCLNPNIKTKFVPVNNKQIVLKEPNCIYLKYDLITLNPSSDHIRILREWFSLYAKIYNYAINLIRKMFYVNNKLIKSRLQCEIYDEIIIRKLSNDKTKLIESLKLSDRPPEFLLDYAISHACTYCNSQVKKYLKDSKNPYNKKTLRFRLWSLHKSRRVMHILPPKLCDKNVCNGLFLKLNPSKNIHDIYMFCVMSWDRLTGKFFVYKPVLKRLINIPKKQFTRCGIDPGVRTFLTLYSSERTYDVCDSTFYNNKIKRMWRKIDRINFLLHNRKKRKKRKNDRRLRKSLAKYYRKIRQRIKDLHTKTAKYLVSRYKEIYIGIYDTSKNLSDPRISFYEKRRIATLNHELFLTKLQQVADRFGSSVFAINEHMTTKTCSKCGRINEIGSSKVHKCACGMYAGRDENAAKNILKKGIKEHYLSAQSDKNVTEYNNKKSNNTNKET.

Positions 416, 419, 433, and 435 each coordinate Zn(2+).

The protein in the central section; belongs to the transposase 2 family. In the C-terminal section; belongs to the transposase 35 family.

In Acanthamoeba polyphaga (Amoeba), this protein is Putative transposase R186.